A 208-amino-acid chain; its full sequence is Protein GrpE (208 aa).

The disordered stretch occupies residues 1–62 (MTEKDESVKS…ETAVDPKDEE (62 aa)). Residues 46–55 (SNEESSEETA) are compositionally biased toward acidic residues.

The protein belongs to the GrpE family. Homodimer.

The protein resides in the cytoplasm. Participates actively in the response to hyperosmotic and heat shock by preventing the aggregation of stress-denatured proteins, in association with DnaK and GrpE. It is the nucleotide exchange factor for DnaK and may function as a thermosensor. Unfolded proteins bind initially to DnaJ; upon interaction with the DnaJ-bound protein, DnaK hydrolyzes its bound ATP, resulting in the formation of a stable complex. GrpE releases ADP from DnaK; ATP binding to DnaK triggers the release of the substrate protein, thus completing the reaction cycle. Several rounds of ATP-dependent interactions between DnaJ, DnaK and GrpE are required for fully efficient folding. This Staphylococcus haemolyticus (strain JCSC1435) protein is Protein GrpE.